We begin with the raw amino-acid sequence, 229 residues long: NAD(P)H-quinone oxidoreductase subunit K, chloroplastic (229 aa).

4 residues coordinate [4Fe-4S] cluster: Cys-43, Cys-44, Cys-108, and Cys-139.

The protein belongs to the complex I 20 kDa subunit family. NDH is composed of at least 16 different subunits, 5 of which are encoded in the nucleus. The cofactor is [4Fe-4S] cluster.

The protein localises to the plastid. It localises to the chloroplast thylakoid membrane. It catalyses the reaction a plastoquinone + NADH + (n+1) H(+)(in) = a plastoquinol + NAD(+) + n H(+)(out). The enzyme catalyses a plastoquinone + NADPH + (n+1) H(+)(in) = a plastoquinol + NADP(+) + n H(+)(out). Functionally, NDH shuttles electrons from NAD(P)H:plastoquinone, via FMN and iron-sulfur (Fe-S) centers, to quinones in the photosynthetic chain and possibly in a chloroplast respiratory chain. The immediate electron acceptor for the enzyme in this species is believed to be plastoquinone. Couples the redox reaction to proton translocation, and thus conserves the redox energy in a proton gradient. The chain is NAD(P)H-quinone oxidoreductase subunit K, chloroplastic from Aethionema grandiflorum (Persian stone-cress).